Reading from the N-terminus, the 151-residue chain is 3-dehydroquinate dehydratase (151 aa).

Tyr24 acts as the Proton acceptor in catalysis. Residues Asn76, His82, and Asp89 each contribute to the substrate site. The active-site Proton donor is the His102. Residues 103–104 and Arg113 each bind substrate; that span reads LS.

The protein belongs to the type-II 3-dehydroquinase family. Homododecamer.

It catalyses the reaction 3-dehydroquinate = 3-dehydroshikimate + H2O. It functions in the pathway metabolic intermediate biosynthesis; chorismate biosynthesis; chorismate from D-erythrose 4-phosphate and phosphoenolpyruvate: step 3/7. Functionally, catalyzes a trans-dehydration via an enolate intermediate. In Acinetobacter baumannii (strain ATCC 17978 / DSM 105126 / CIP 53.77 / LMG 1025 / NCDC KC755 / 5377), this protein is 3-dehydroquinate dehydratase.